The sequence spans 213 residues: Imidazole glycerol phosphate synthase subunit HisH 1 (213 aa).

The Glutamine amidotransferase type-1 domain occupies 4–213 (TVAVIDYGMG…QNFVAWDGRW (210 aa)). The active-site Nucleophile is C82. Residues H191 and E193 contribute to the active site.

In terms of assembly, heterodimer of HisH and HisF.

It localises to the cytoplasm. It carries out the reaction 5-[(5-phospho-1-deoxy-D-ribulos-1-ylimino)methylamino]-1-(5-phospho-beta-D-ribosyl)imidazole-4-carboxamide + L-glutamine = D-erythro-1-(imidazol-4-yl)glycerol 3-phosphate + 5-amino-1-(5-phospho-beta-D-ribosyl)imidazole-4-carboxamide + L-glutamate + H(+). The enzyme catalyses L-glutamine + H2O = L-glutamate + NH4(+). It participates in amino-acid biosynthesis; L-histidine biosynthesis; L-histidine from 5-phospho-alpha-D-ribose 1-diphosphate: step 5/9. Its function is as follows. IGPS catalyzes the conversion of PRFAR and glutamine to IGP, AICAR and glutamate. The HisH subunit provides the glutamine amidotransferase activity that produces the ammonia necessary to HisF for the synthesis of IGP and AICAR. The chain is Imidazole glycerol phosphate synthase subunit HisH 1 (hisH1) from Pseudomonas aeruginosa (strain ATCC 15692 / DSM 22644 / CIP 104116 / JCM 14847 / LMG 12228 / 1C / PRS 101 / PAO1).